Consider the following 426-residue polypeptide: UPF0761 membrane protein Nmul_A0452 (426 aa).

Transmembrane regions (helical) follow at residues 48–68 (LLSL…FPAF), 106–126 (LTAI…LTID), 145–165 (LLIY…SLSL), 187–207 (LLRL…YLIV), 217–237 (AIAG…GFAF), and 255–275 (IPIF…GAVI).

It belongs to the UPF0761 family.

It localises to the cell inner membrane. The protein is UPF0761 membrane protein Nmul_A0452 of Nitrosospira multiformis (strain ATCC 25196 / NCIMB 11849 / C 71).